A 422-amino-acid chain; its full sequence is Glutamyl-tRNA reductase (422 aa).

Substrate contacts are provided by residues 49–52, Ser108, 113–115, and Gln119; these read TCNR and EPQ. Residue Cys50 is the Nucleophile of the active site. 188–193 contributes to the NADP(+) binding site; that stretch reads GAGQTI.

Belongs to the glutamyl-tRNA reductase family. Homodimer.

It carries out the reaction (S)-4-amino-5-oxopentanoate + tRNA(Glu) + NADP(+) = L-glutamyl-tRNA(Glu) + NADPH + H(+). It functions in the pathway porphyrin-containing compound metabolism; protoporphyrin-IX biosynthesis; 5-aminolevulinate from L-glutamyl-tRNA(Glu): step 1/2. In terms of biological role, catalyzes the NADPH-dependent reduction of glutamyl-tRNA(Glu) to glutamate 1-semialdehyde (GSA). This chain is Glutamyl-tRNA reductase, found in Marinomonas sp. (strain MWYL1).